We begin with the raw amino-acid sequence, 446 residues long: Dimethylsulfoniopropionate lyase DddP (446 aa).

Positions 1 to 13 (MNQHYSETRKIDP) are enriched in basic and acidic residues. The tract at residues 1-30 (MNQHYSETRKIDPSRGATLGDNTPNDNNRI) is disordered. A divalent metal cation contacts are provided by aspartate 295, aspartate 297, aspartate 307, histidine 371, glutamate 406, and glutamate 421.

Belongs to the peptidase M24B family. Homodimer. The cofactor is a divalent metal cation.

It catalyses the reaction S,S-dimethyl-beta-propiothetin = acrylate + dimethyl sulfide + H(+). Its function is as follows. Able to cleave dimethylsulfoniopropionate (DMSP), releasing dimethyl sulfide (DMS). DMS is the principal form by which sulfur is transported from oceans to the atmosphere. The real activity of the protein is however subject to debate and it is unclear whether it constitutes a real dimethylsulfoniopropionate lyase in vivo: the low activity with DMSP as substrate suggests that DMSP is not its native substrate. In Roseovarius nubinhibens (strain ATCC BAA-591 / DSM 15170 / ISM), this protein is Dimethylsulfoniopropionate lyase DddP.